The chain runs to 301 residues: J domain-containing protein 1 (301 aa).

The 93-residue stretch at 58-150 folds into the J domain; that stretch reads TPYDIFGIPK…KKKIVYDTTR (93 aa). The helical transmembrane segment at 208–228 threads the bilayer; sequence WTVIGIICGLAICIEGTALLA.

This sequence belongs to the DnaJ family.

It is found in the mitochondrion membrane. Probable chaperone. This Saccharomyces cerevisiae (strain ATCC 204508 / S288c) (Baker's yeast) protein is J domain-containing protein 1 (JID1).